A 335-amino-acid polypeptide reads, in one-letter code: Zinc-type alcohol dehydrogenase-like protein SAR2277 (335 aa).

Belongs to the zinc-containing alcohol dehydrogenase family. Quinone oxidoreductase subfamily.

The sequence is that of Zinc-type alcohol dehydrogenase-like protein SAR2277 from Staphylococcus aureus (strain MRSA252).